The sequence spans 113 residues: Large ribosomal subunit protein bL19 (113 aa).

It belongs to the bacterial ribosomal protein bL19 family.

This protein is located at the 30S-50S ribosomal subunit interface and may play a role in the structure and function of the aminoacyl-tRNA binding site. This chain is Large ribosomal subunit protein bL19, found in Corynebacterium efficiens (strain DSM 44549 / YS-314 / AJ 12310 / JCM 11189 / NBRC 100395).